The primary structure comprises 62 residues: Photosystem II reaction center protein Z (62 aa).

Helical transmembrane passes span Ala8–Ala28 and Phe41–Val61.

This sequence belongs to the PsbZ family. As to quaternary structure, PSII is composed of 1 copy each of membrane proteins PsbA, PsbB, PsbC, PsbD, PsbE, PsbF, PsbH, PsbI, PsbJ, PsbK, PsbL, PsbM, PsbT, PsbY, PsbZ, Psb30/Ycf12, at least 3 peripheral proteins of the oxygen-evolving complex and a large number of cofactors. It forms dimeric complexes.

The protein resides in the plastid. Its subcellular location is the chloroplast thylakoid membrane. In terms of biological role, may control the interaction of photosystem II (PSII) cores with the light-harvesting antenna, regulates electron flow through the 2 photosystem reaction centers. PSII is a light-driven water plastoquinone oxidoreductase, using light energy to abstract electrons from H(2)O, generating a proton gradient subsequently used for ATP formation. In Nephroselmis olivacea (Green alga), this protein is Photosystem II reaction center protein Z.